The chain runs to 309 residues: GTP cyclohydrolase MptA 2 (309 aa).

Belongs to the GTP cyclohydrolase IV family. Homodimer. Fe(2+) is required as a cofactor.

The catalysed reaction is GTP + H2O = 7,8-dihydroneopterin 2',3'-cyclic phosphate + formate + diphosphate + H(+). It functions in the pathway cofactor biosynthesis; 5,6,7,8-tetrahydromethanopterin biosynthesis. Converts GTP to 7,8-dihydro-D-neopterin 2',3'-cyclic phosphate, the first intermediate in the biosynthesis of coenzyme methanopterin. The chain is GTP cyclohydrolase MptA 2 from Methanocella arvoryzae (strain DSM 22066 / NBRC 105507 / MRE50).